A 303-amino-acid polypeptide reads, in one-letter code: Geranylgeranyl pyrophosphate synthase (303 aa).

Residues lysine 30, arginine 33, and histidine 62 each coordinate isopentenyl diphosphate. Mg(2+) is bound by residues aspartate 69 and aspartate 73. Arginine 78 contacts dimethylallyl diphosphate. Arginine 79 is an isopentenyl diphosphate binding site. Residues lysine 156, threonine 157, glutamine 190, lysine 207, and lysine 217 each contribute to the dimethylallyl diphosphate site.

This sequence belongs to the FPP/GGPP synthase family. Requires Mg(2+) as cofactor.

Its subcellular location is the cytoplasm. The enzyme catalyses isopentenyl diphosphate + dimethylallyl diphosphate = (2E)-geranyl diphosphate + diphosphate. It catalyses the reaction isopentenyl diphosphate + (2E)-geranyl diphosphate = (2E,6E)-farnesyl diphosphate + diphosphate. It carries out the reaction isopentenyl diphosphate + (2E,6E)-farnesyl diphosphate = (2E,6E,10E)-geranylgeranyl diphosphate + diphosphate. Its pathway is isoprenoid biosynthesis; farnesyl diphosphate biosynthesis; farnesyl diphosphate from geranyl diphosphate and isopentenyl diphosphate: step 1/1. It functions in the pathway isoprenoid biosynthesis; geranyl diphosphate biosynthesis; geranyl diphosphate from dimethylallyl diphosphate and isopentenyl diphosphate: step 1/1. It participates in isoprenoid biosynthesis; geranylgeranyl diphosphate biosynthesis; geranylgeranyl diphosphate from farnesyl diphosphate and isopentenyl diphosphate: step 1/1. Catalyzes the trans-addition of the three molecules of IPP onto DMAPP to form geranylgeranyl pyrophosphate. The sequence is that of Geranylgeranyl pyrophosphate synthase from Mucor circinelloides f. lusitanicus (Mucor racemosus var. lusitanicus).